The chain runs to 47 residues: Large ribosomal subunit protein eL40 (47 aa).

It belongs to the eukaryotic ribosomal protein eL40 family.

In Methanococcus maripaludis (strain C5 / ATCC BAA-1333), this protein is Large ribosomal subunit protein eL40.